The chain runs to 1461 residues: DNA topoisomerase 2 (1461 aa).

A compositionally biased stretch (acidic residues) spans 1-17 (MSESESDYFTDGSEDDF). Residues 1–61 (MSESESDYFT…TPKPTNASET (61 aa)) are disordered. Residues 41-52 (TNSTVSSSRSST) show a composition bias toward low complexity. ATP contacts are provided by residues N120, N149, 177 to 179 (SSN), and 190 to 197 (GRNGFGAK). Residues 382–389 (SKKEKGKK) form an interaction with DNA region. 418–420 (QTK) is a binding site for ATP. The region spanning 498–614 (CTLILTEGLS…GLLDIPGFLL (117 aa)) is the Toprim domain. Residues E504, D583, and D585 each contribute to the Mg(2+) site. In terms of domain architecture, Topo IIA-type catalytic spans 752 to 1226 (IPSVLDGFKP…SAKDLWNQDL (475 aa)). Y842 serves as the catalytic O-(5'-phospho-DNA)-tyrosine intermediate. An interaction with DNA region spans residues 1024–1033 (KLVSSLSLAN). Disordered regions lie at residues 1122–1155 (DGKP…DVGN) and 1244–1461 (RESL…IVDE). The span at 1133 to 1153 (LTGDDADEEEETQEQEGDEDV) shows a compositional bias: acidic residues. The segment covering 1251–1261 (GKKKSTKRRAK) has biased composition (basic residues). Composition is skewed to basic and acidic residues over residues 1274 to 1283 (VKVEPKEKKS) and 1406 to 1417 (DKPEPKERRTRE). The segment covering 1434-1461 (DSDDEDEDEEDDIVMSDGDDDDDFIVDE) has biased composition (acidic residues).

Belongs to the type II topoisomerase family. In terms of assembly, homodimer. Requires Mg(2+) as cofactor. It depends on Mn(2+) as a cofactor. Ca(2+) is required as a cofactor.

The protein localises to the nucleus. It catalyses the reaction ATP-dependent breakage, passage and rejoining of double-stranded DNA.. Its function is as follows. Control of topological states of DNA by transient breakage and subsequent rejoining of DNA strands. Topoisomerase II makes double-strand breaks. This is DNA topoisomerase 2 (TOP2) from Candida albicans (Yeast).